Reading from the N-terminus, the 358-residue chain is Phosphoserine aminotransferase (358 aa).

Arginine 41 provides a ligand contact to L-glutamate. Residues 75 to 76 (AS), tryptophan 100, threonine 148, aspartate 167, and glutamine 190 each bind pyridoxal 5'-phosphate. Lysine 191 is modified (N6-(pyridoxal phosphate)lysine). Position 233 to 234 (233 to 234 (NT)) interacts with pyridoxal 5'-phosphate.

The protein belongs to the class-V pyridoxal-phosphate-dependent aminotransferase family. SerC subfamily. As to quaternary structure, homodimer. Pyridoxal 5'-phosphate is required as a cofactor.

The protein resides in the cytoplasm. The catalysed reaction is O-phospho-L-serine + 2-oxoglutarate = 3-phosphooxypyruvate + L-glutamate. The enzyme catalyses 4-(phosphooxy)-L-threonine + 2-oxoglutarate = (R)-3-hydroxy-2-oxo-4-phosphooxybutanoate + L-glutamate. Its pathway is amino-acid biosynthesis; L-serine biosynthesis; L-serine from 3-phospho-D-glycerate: step 2/3. It functions in the pathway cofactor biosynthesis; pyridoxine 5'-phosphate biosynthesis; pyridoxine 5'-phosphate from D-erythrose 4-phosphate: step 3/5. Catalyzes the reversible conversion of 3-phosphohydroxypyruvate to phosphoserine and of 3-hydroxy-2-oxo-4-phosphonooxybutanoate to phosphohydroxythreonine. The protein is Phosphoserine aminotransferase of Campylobacter jejuni subsp. jejuni serotype O:23/36 (strain 81-176).